The chain runs to 224 residues: MAVTFSDLHTEEGVKSVEEHLAGKTYISGDQLSVDDVKVYAAVPVKPSDAFPNASKWYESVASQLAKSFPGKAVGVQFGGSAAAAPAVEAEAPAAAADDDDDMDLFGDETEEEKKAAEEREAAKKDTKKPKESGKSSVLMDVKPWDDETDMKKLEEAVRGVEMPGLFWGASKLVPVGYGIKKLTIMFTIVDDLVSPDNLIEDFLTSEPNNEYIQSCDIVAFNKI.

Position 2 is an N-acetylalanine (Ala-2). Residues 14-65 form the GST C-terminal domain; it reads VKSVEEHLAGKTYISGDQLSVDDVKVYAAVPVKPSDAFPNASKWYESVASQL. The interval 89–139 is disordered; it reads EAEAPAAAADDDDDMDLFGDETEEEKKAAEEREAAKKDTKKPKESGKSSVL. Over residues 97–111 the composition is skewed to acidic residues; it reads ADDDDDMDLFGDETE. Basic and acidic residues predominate over residues 112-134; the sequence is EEKKAAEEREAAKKDTKKPKESG.

It belongs to the EF-1-beta/EF-1-delta family. As to quaternary structure, EF-1 is composed of 4 subunits: alpha, beta (1B-alpha=beta'), delta (1B-beta), and gamma (1B-gamma).

EF-1-beta and EF-1-delta stimulate the exchange of GDP bound to EF-1-alpha to GTP. This chain is Elongation factor 1-beta 2, found in Arabidopsis thaliana (Mouse-ear cress).